We begin with the raw amino-acid sequence, 166 residues long: Regulatory protein RecX (166 aa).

Belongs to the RecX family.

The protein localises to the cytoplasm. Functionally, modulates RecA activity. This chain is Regulatory protein RecX, found in Escherichia coli O139:H28 (strain E24377A / ETEC).